Here is a 138-residue protein sequence, read N- to C-terminus: Large ribosomal subunit protein bL17 (138 aa).

This sequence belongs to the bacterial ribosomal protein bL17 family. As to quaternary structure, part of the 50S ribosomal subunit. Contacts protein L32.

This chain is Large ribosomal subunit protein bL17, found in Phenylobacterium zucineum (strain HLK1).